The chain runs to 902 residues: AP-4 complex accessory subunit RUSC1 (902 aa).

4 disordered regions span residues 31 to 67 (ELQE…SNSP), 81 to 155 (LENR…PGTC), 189 to 227 (QDVP…KTEP), and 247 to 450 (KTTE…AQAG). Positions 94–112 (AASPSDPGCSSSLSSCSDL) are enriched in low complexity. Over residues 249–261 (TENNNTGWKNNGN) the composition is skewed to low complexity. Over residues 277–289 (WKTNTRITDSGSK) the composition is skewed to polar residues. Basic and acidic residues predominate over residues 291 to 309 (DAGKIDGGWRSDVSEEPVP). Pro residues-rich tracts occupy residues 381 to 390 (PAPPVPPRDP) and 398 to 407 (PPRPPPPPVP). Low complexity predominate over residues 433–450 (PAAGEEAPAAKEPGAQAG). An interaction with TRAF6 region spans residues 470–605 (MAEAQSGTGQ…FHAFILGLLN (136 aa)). In terms of domain architecture, RUN spans 522–666 (DVGHLVLTTL…LTFHLDLLFE (145 aa)). Residues 606 to 672 (TKQLELWFSS…LLFEHHHHLP (67 aa)) form an interaction with IKBKG region. Disordered regions lie at residues 706–729 (LRGT…PGSW) and 747–776 (GFPL…TDEM). The 59-residue stretch at 844-902 (QTHRAVRALCDHTAARPDQLSFRRGEVLRVITTVDEDWLRCGRDGMEGLVPVGYTSLVL) folds into the SH3 domain.

Associated component of the adapter-like complex 4 (AP-4). Interacts with IKBKG and TRAF6. Interacts with F-actin, acetylated actin, TUBB3, STX1A, KIF5B and KLC1. Phosphorylated on serine residues following nuclear translocation. Post-translationally, polyubiquitinated; polyubiquitination involves TRAF6. In terms of tissue distribution, predominantly expressed in brain.

The protein resides in the cytoplasm. The protein localises to the nucleus. It localises to the cytoskeleton. Its subcellular location is the cytoplasmic vesicle. It is found in the early endosome. The protein resides in the postsynaptic density. The protein localises to the golgi apparatus. Functionally, associates with the adapter-like complex 4 (AP-4) and may therefore play a role in vesicular trafficking of proteins at the trans-Golgi network. Signaling adapter which plays a role in neuronal differentiation. Involved in regulation of NGF-dependent neurite outgrowth. May play a role in neuronal vesicular trafficking, specifically involving pre-synaptic membrane proteins. Seems to be involved in signaling pathways that are regulated by the prolonged activation of MAPK. Can regulate the polyubiquitination of IKBKG and thus may be involved in regulation of the NF-kappa-B pathway. This Homo sapiens (Human) protein is AP-4 complex accessory subunit RUSC1.